The sequence spans 687 residues: Threonine--tRNA ligase (687 aa).

The 67-residue stretch at 1–67 (MAHLIEAAPN…EQDSKFTPVP (67 aa)) folds into the TGS domain. Residues 266-572 (DHRRLGAELD…LLEHYAGAFP (307 aa)) are catalytic. Cys-371, His-422, and His-549 together coordinate Zn(2+).

Belongs to the class-II aminoacyl-tRNA synthetase family. Homodimer. It depends on Zn(2+) as a cofactor.

The protein localises to the cytoplasm. It carries out the reaction tRNA(Thr) + L-threonine + ATP = L-threonyl-tRNA(Thr) + AMP + diphosphate + H(+). In terms of biological role, catalyzes the attachment of threonine to tRNA(Thr) in a two-step reaction: L-threonine is first activated by ATP to form Thr-AMP and then transferred to the acceptor end of tRNA(Thr). Also edits incorrectly charged L-seryl-tRNA(Thr). The polypeptide is Threonine--tRNA ligase (Corynebacterium diphtheriae (strain ATCC 700971 / NCTC 13129 / Biotype gravis)).